The primary structure comprises 166 residues: FMN reductase (NADH) RutF (166 aa).

It belongs to the non-flavoprotein flavin reductase family. RutF subfamily.

It catalyses the reaction FMNH2 + NAD(+) = FMN + NADH + 2 H(+). Catalyzes the reduction of FMN to FMNH2 which is used to reduce pyrimidine by RutA via the Rut pathway. This is FMN reductase (NADH) RutF from Cronobacter turicensis (strain DSM 18703 / CCUG 55852 / LMG 23827 / z3032).